Here is a 314-residue protein sequence, read N- to C-terminus: 3'-5' exoribonuclease YhaM (314 aa).

In terms of domain architecture, HD spans 163 to 279 (HVVSMLDLAK…LHYIDNLDAK (117 aa)).

The protein belongs to the YhaM family.

In terms of biological role, shows a 3'-5' exoribonuclease activity. This Bacillus cereus (strain AH187) protein is 3'-5' exoribonuclease YhaM.